A 402-amino-acid polypeptide reads, in one-letter code: Pyridinium-3,5-bisthiocarboxylic acid mononucleotide nickel insertion protein (402 aa).

It belongs to the LarC family.

The enzyme catalyses Ni(II)-pyridinium-3,5-bisthiocarboxylate mononucleotide = pyridinium-3,5-bisthiocarboxylate mononucleotide + Ni(2+). In terms of biological role, involved in the biosynthesis of a nickel-pincer cofactor ((SCS)Ni(II) pincer complex). Binds Ni(2+), and functions in nickel delivery to pyridinium-3,5-bisthiocarboxylic acid mononucleotide (P2TMN), to form the mature cofactor. Is thus probably required for the activation of nickel-pincer cofactor-dependent enzymes. The chain is Pyridinium-3,5-bisthiocarboxylic acid mononucleotide nickel insertion protein from Desulfitobacterium hafniense (strain Y51).